Reading from the N-terminus, the 420-residue chain is Glucose-1-phosphate adenylyltransferase (420 aa).

Residues Tyr-107, Gly-172, 187 to 188, and Ser-205 contribute to the alpha-D-glucose 1-phosphate site; that span reads EK.

Belongs to the bacterial/plant glucose-1-phosphate adenylyltransferase family. As to quaternary structure, homotetramer.

It catalyses the reaction alpha-D-glucose 1-phosphate + ATP + H(+) = ADP-alpha-D-glucose + diphosphate. The protein operates within glycan biosynthesis; glycogen biosynthesis. Its function is as follows. Involved in the biosynthesis of ADP-glucose, a building block required for the elongation reactions to produce glycogen. Catalyzes the reaction between ATP and alpha-D-glucose 1-phosphate (G1P) to produce pyrophosphate and ADP-Glc. The sequence is that of Glucose-1-phosphate adenylyltransferase from Rhizobium johnstonii (strain DSM 114642 / LMG 32736 / 3841) (Rhizobium leguminosarum bv. viciae).